We begin with the raw amino-acid sequence, 228 residues long: 2-C-methyl-D-erythritol 4-phosphate cytidylyltransferase (228 aa).

The protein belongs to the IspD/TarI cytidylyltransferase family. IspD subfamily.

It catalyses the reaction 2-C-methyl-D-erythritol 4-phosphate + CTP + H(+) = 4-CDP-2-C-methyl-D-erythritol + diphosphate. Its pathway is isoprenoid biosynthesis; isopentenyl diphosphate biosynthesis via DXP pathway; isopentenyl diphosphate from 1-deoxy-D-xylulose 5-phosphate: step 2/6. Functionally, catalyzes the formation of 4-diphosphocytidyl-2-C-methyl-D-erythritol from CTP and 2-C-methyl-D-erythritol 4-phosphate (MEP). The sequence is that of 2-C-methyl-D-erythritol 4-phosphate cytidylyltransferase from Nostoc sp. (strain PCC 7120 / SAG 25.82 / UTEX 2576).